Here is a 565-residue protein sequence, read N- to C-terminus: O-fucosyltransferase 7 (565 aa).

The chain crosses the membrane as a helical; Signal-anchor for type II membrane protein span at residues 17–37; the sequence is VLIWAICVMTLLCFLTVHIYV. 5 N-linked (GlcNAc...) asparagine glycosylation sites follow: asparagine 62, asparagine 73, asparagine 104, asparagine 124, and asparagine 190. 327–329 is a substrate binding site; that stretch reads HLR. Asparagine 441 carries N-linked (GlcNAc...) asparagine glycosylation. The disordered stretch occupies residues 515 to 565; that stretch reads NEIHKTRQGSPRRRKGPASGTKGLERHRSEESFYENPLPDCLCQRDPSKAR. A compositionally biased stretch (basic residues) spans 520–530; the sequence is TRQGSPRRRKG.

The protein belongs to the glycosyltransferase GT106 family.

It localises to the membrane. It participates in glycan metabolism. The protein is O-fucosyltransferase 7 of Arabidopsis thaliana (Mouse-ear cress).